Consider the following 299-residue polypeptide: Dye-decolorizing peroxidase YfeX (299 aa).

His-215 contacts heme.

It belongs to the DyP-type peroxidase family. It depends on heme b as a cofactor.

It is found in the cytoplasm. In terms of biological role, has both general peroxidase activity and dye-decolorizing activity. Can catalyze the oxidation of 2,2'-azino-bis(3-ethylbenzothiazoline-6-sulphonic acid) (ABTS), and the phenolic compounds guaiacol and catechol. Also decolorizes the anthraquinone dye reactive blue 19 (RB19). This chain is Dye-decolorizing peroxidase YfeX, found in Escherichia coli O157:H7.